A 128-amino-acid chain; its full sequence is Flagellar assembly factor FliW (128 aa).

It belongs to the FliW family. In terms of assembly, interacts with translational regulator CsrA and flagellin(s).

It is found in the cytoplasm. Functionally, acts as an anti-CsrA protein, binds CsrA and prevents it from repressing translation of its target genes, one of which is flagellin. Binds to flagellin and participates in the assembly of the flagellum. The chain is Flagellar assembly factor FliW from Campylobacter fetus subsp. fetus (strain 82-40).